A 207-amino-acid chain; its full sequence is Ras-related protein Rab-7a (207 aa).

The residue at position 2 (Thr-2) is an N-acetylthreonine. Ser-17, Gly-18, Val-19, Gly-20, Lys-21, Thr-22, Ser-23, Ser-34, Asn-35, Tyr-37, and Thr-40 together coordinate GTP. Position 22 (Thr-22) interacts with Mg(2+). Residues 28 to 41 carry the Switch 1 motif; sequence YVNKKFSNQYKATI. Positions 40 and 63 each coordinate Mg(2+). Residue Gly-66 participates in GTP binding. The Switch 2 signature appears at 67–82; it reads QERFQSLGVAFYRGAD. Phosphoserine is present on Ser-72. 5 residues coordinate GTP: Asn-125, Lys-126, Asp-128, Ala-156, and Lys-157. Glycyl lysine isopeptide (Lys-Gly) (interchain with G-Cter in ubiquitin) cross-links involve residues Lys-191 and Lys-194. S-geranylgeranyl cysteine attachment occurs at residues Cys-205 and Cys-207. Position 207 is a cysteine methyl ester (Cys-207).

Belongs to the small GTPase superfamily. Rab family. As to quaternary structure, interacts with NTRK1/TRKA. Interacts with RILP. Interacts with PSMA7. Interacts with RNF115. Interacts with FYCO1. Interacts with the PIK3C3/VPS34-PIK3R4 complex. The GTP-bound form interacts with OSBPL1A. The GTP-bound form interacts with RAC1. Interacts with CLN3. Interacts with CHM, the substrate-binding subunit of the Rab geranylgeranyltransferase complex. Interacts with C9orf72. Does not interact with HPS4 and the BLOC-3 complex (heterodimer of HPS1 and HPS4). Interacts with CLN5. Interacts with PLEKHM1 (via N- and C-terminus). Interacts with PRPH; the interaction is direct. Interacts with VPS13A. The GDP-bound form interacts with RIMOC1. Interacts with the MON1A-CCZ1B complex and this interaction is enhanced in the presence of RIMOC1. Interacts with VPS39 and VPS41. Forms a ternary complex with LAMP2 and RUFY4; the interaction with LAMP2 is mediated by RUFY4 (via RUN and coiled coil domains). Requires Mg(2+) as cofactor. Post-translationally, deubiquitination at Lys-191 and Lys-194 by USP32. In terms of processing, phosphorylated at Ser-72 by LRRK1; phosphorylation is dependent on protein kinase C (PKC) activation of LRRK1. Prenylated. Prenylation is required for association with cellular membranes.

It localises to the cytoplasmic vesicle. Its subcellular location is the phagosome membrane. It is found in the late endosome membrane. The protein resides in the lysosome membrane. The protein localises to the melanosome membrane. It localises to the autophagosome membrane. Its subcellular location is the lipid droplet. It is found in the endosome membrane. The protein resides in the mitochondrion membrane. The catalysed reaction is GTP + H2O = GDP + phosphate + H(+). With respect to regulation, regulated by guanine nucleotide exchange factors (GEFs) which promote the exchange of bound GDP for free GTP. Regulated by GTPase activating proteins (GAPs) which increase the GTP hydrolysis activity. Inhibited by GDP dissociation inhibitors (GDIs). The small GTPases Rab are key regulators of intracellular membrane trafficking, from the formation of transport vesicles to their fusion with membranes. Rabs cycle between an inactive GDP-bound form and an active GTP-bound form that is able to recruit to membranes different sets of downstream effectors directly responsible for vesicle formation, movement, tethering and fusion. In its active state, RAB7A binds to a variety of effector proteins playing a key role in the regulation of endo-lysosomal trafficking. Governs early-to-late endosomal maturation, microtubule minus-end as well as plus-end directed endosomal migration and positioning, and endosome-lysosome transport through different protein-protein interaction cascades. Also plays a central role in growth-factor-mediated cell signaling, nutrient-transporter-mediated nutrient uptake, neurotrophin transport in the axons of neurons and lipid metabolism. Also involved in regulation of some specialized endosomal membrane trafficking, such as maturation of melanosomes, pathogen-induced phagosomes (or vacuoles) and autophagosomes. Plays a role in the maturation and acidification of phagosomes that engulf pathogens, such as S.aureus and Mycobacteria. Plays a role in the fusion of phagosomes with lysosomes. In concert with RAC1, plays a role in regulating the formation of RBs (ruffled borders) in osteoclasts. Controls the endosomal trafficking and neurite outgrowth signaling of NTRK1/TRKA. Regulates the endocytic trafficking of the EGF-EGFR complex by regulating its lysosomal degradation. Involved in the ADRB2-stimulated lipolysis through lipophagy, a cytosolic lipase-independent autophagic pathway. Required for the exosomal release of SDCBP, CD63 and syndecan. Required for vesicular trafficking and cell surface expression of ACE2. May play a role in PRPH neuronal intermediate filament assembly. In Bos taurus (Bovine), this protein is Ras-related protein Rab-7a (RAB7A).